The chain runs to 353 residues: Type 2 DNA topoisomerase 6 subunit A (353 aa).

Residues 2-138 (NRREIAINKL…LGLMPEEDGA (137 aa)) enclose the Topo IIA-type catalytic domain. Residue Y96 is the O-(5'-phospho-DNA)-tyrosine intermediate of the active site. The Mg(2+) site is built by E186 and D238.

The protein belongs to the TOP6A family. In terms of assembly, homodimer. Heterotetramer of two Top6A and two Top6B chains. The cofactor is Mg(2+).

The catalysed reaction is ATP-dependent breakage, passage and rejoining of double-stranded DNA.. Relaxes both positive and negative superturns and exhibits a strong decatenase activity. In Methanothermobacter thermautotrophicus (strain ATCC 29096 / DSM 1053 / JCM 10044 / NBRC 100330 / Delta H) (Methanobacterium thermoautotrophicum), this protein is Type 2 DNA topoisomerase 6 subunit A.